The chain runs to 261 residues: Undecaprenyl-diphosphatase (261 aa).

The next 7 membrane-spanning stretches (helical) occupy residues 38-58 (RSDF…TFVF), 75-95 (RDYV…GLAV), 106-126 (IQPI…AESV), 136-156 (VTWS…VFPG), 181-201 (FSFL…CFEL), 217-237 (VAFV…LGYI), and 241-261 (SFAP…TWLT).

Belongs to the UppP family.

The protein resides in the cell inner membrane. The enzyme catalyses di-trans,octa-cis-undecaprenyl diphosphate + H2O = di-trans,octa-cis-undecaprenyl phosphate + phosphate + H(+). In terms of biological role, catalyzes the dephosphorylation of undecaprenyl diphosphate (UPP). Confers resistance to bacitracin. The polypeptide is Undecaprenyl-diphosphatase (Xylella fastidiosa (strain Temecula1 / ATCC 700964)).